A 221-amino-acid polypeptide reads, in one-letter code: Deoxyribose-phosphate aldolase (221 aa).

Asp-91 (proton donor/acceptor) is an active-site residue. Lys-153 (schiff-base intermediate with acetaldehyde) is an active-site residue. Residue Lys-182 is the Proton donor/acceptor of the active site.

The protein belongs to the DeoC/FbaB aldolase family. DeoC type 1 subfamily.

The protein resides in the cytoplasm. The enzyme catalyses 2-deoxy-D-ribose 5-phosphate = D-glyceraldehyde 3-phosphate + acetaldehyde. The protein operates within carbohydrate degradation; 2-deoxy-D-ribose 1-phosphate degradation; D-glyceraldehyde 3-phosphate and acetaldehyde from 2-deoxy-alpha-D-ribose 1-phosphate: step 2/2. Functionally, catalyzes a reversible aldol reaction between acetaldehyde and D-glyceraldehyde 3-phosphate to generate 2-deoxy-D-ribose 5-phosphate. In Clostridium botulinum (strain Alaska E43 / Type E3), this protein is Deoxyribose-phosphate aldolase.